A 376-amino-acid polypeptide reads, in one-letter code: NIF3-like protein 1 (376 aa).

Lysine 108 bears the N6-acetyllysine mark. The mediates interaction with COPS2 stretch occupies residues 243-376 (LLLHTGMGRL…ETDRDPLRVV (134 aa)). A Phosphothreonine modification is found at threonine 254. A Phosphoserine modification is found at serine 258.

The protein belongs to the GTP cyclohydrolase I type 2/NIF3 family. In terms of assembly, homodimer. Interacts with COPS2. Interacts with THOC7. Ubiquitous. Detected in all tissues tested with higher expression in cerebellum, heart and kidney and to a lower level in cerebrum, lung, liver, spleen and muscle.

It localises to the cytoplasm. The protein localises to the nucleus. Its function is as follows. May function as a transcriptional corepressor through its interaction with COPS2, negatively regulating the expression of genes involved in neuronal differentiation. This chain is NIF3-like protein 1, found in Mus musculus (Mouse).